Consider the following 326-residue polypeptide: Phenylalanine--tRNA ligase alpha subunit (326 aa).

Glutamate 251 serves as a coordination point for Mg(2+).

The protein belongs to the class-II aminoacyl-tRNA synthetase family. Phe-tRNA synthetase alpha subunit type 1 subfamily. In terms of assembly, tetramer of two alpha and two beta subunits. It depends on Mg(2+) as a cofactor.

Its subcellular location is the cytoplasm. The catalysed reaction is tRNA(Phe) + L-phenylalanine + ATP = L-phenylalanyl-tRNA(Phe) + AMP + diphosphate + H(+). The polypeptide is Phenylalanine--tRNA ligase alpha subunit (Alteromonas mediterranea (strain DSM 17117 / CIP 110805 / LMG 28347 / Deep ecotype)).